A 345-amino-acid chain; its full sequence is Holliday junction branch migration complex subunit RuvB (345 aa).

The interval 1–183 is large ATPase domain (RuvB-L); that stretch reads MTTQRLVSAA…FGIVHRLEFY (183 aa). ATP-binding positions include isoleucine 22, arginine 23, glycine 64, lysine 67, threonine 68, threonine 69, 130-132, arginine 173, tyrosine 183, and arginine 220; that span reads EDY. Threonine 68 serves as a coordination point for Mg(2+). The segment at 184-254 is small ATPAse domain (RuvB-S); sequence SVEELSRIVA…VAGKALEMLD (71 aa). Positions 257–345 are head domain (RuvB-H); that stretch reads PNGFDQSDRR…NVNEELFGDE (89 aa). DNA-binding residues include arginine 293, arginine 312, and arginine 317.

The protein belongs to the RuvB family. Homohexamer. Forms an RuvA(8)-RuvB(12)-Holliday junction (HJ) complex. HJ DNA is sandwiched between 2 RuvA tetramers; dsDNA enters through RuvA and exits via RuvB. An RuvB hexamer assembles on each DNA strand where it exits the tetramer. Each RuvB hexamer is contacted by two RuvA subunits (via domain III) on 2 adjacent RuvB subunits; this complex drives branch migration. In the full resolvosome a probable DNA-RuvA(4)-RuvB(12)-RuvC(2) complex forms which resolves the HJ.

It localises to the cytoplasm. It catalyses the reaction ATP + H2O = ADP + phosphate + H(+). The RuvA-RuvB-RuvC complex processes Holliday junction (HJ) DNA during genetic recombination and DNA repair, while the RuvA-RuvB complex plays an important role in the rescue of blocked DNA replication forks via replication fork reversal (RFR). RuvA specifically binds to HJ cruciform DNA, conferring on it an open structure. The RuvB hexamer acts as an ATP-dependent pump, pulling dsDNA into and through the RuvAB complex. RuvB forms 2 homohexamers on either side of HJ DNA bound by 1 or 2 RuvA tetramers; 4 subunits per hexamer contact DNA at a time. Coordinated motions by a converter formed by DNA-disengaged RuvB subunits stimulates ATP hydrolysis and nucleotide exchange. Immobilization of the converter enables RuvB to convert the ATP-contained energy into a lever motion, pulling 2 nucleotides of DNA out of the RuvA tetramer per ATP hydrolyzed, thus driving DNA branch migration. The RuvB motors rotate together with the DNA substrate, which together with the progressing nucleotide cycle form the mechanistic basis for DNA recombination by continuous HJ branch migration. Branch migration allows RuvC to scan DNA until it finds its consensus sequence, where it cleaves and resolves cruciform DNA. The protein is Holliday junction branch migration complex subunit RuvB of Methylococcus capsulatus (strain ATCC 33009 / NCIMB 11132 / Bath).